The chain runs to 132 residues: Small ribosomal subunit protein uS8 (132 aa).

The protein belongs to the universal ribosomal protein uS8 family. Part of the 30S ribosomal subunit. Contacts proteins S5 and S12.

In terms of biological role, one of the primary rRNA binding proteins, it binds directly to 16S rRNA central domain where it helps coordinate assembly of the platform of the 30S subunit. The polypeptide is Small ribosomal subunit protein uS8 (Bartonella bacilliformis (strain ATCC 35685 / KC583 / Herrer 020/F12,63)).